Reading from the N-terminus, the 360-residue chain is NAD(P)H-quinone oxidoreductase subunit 1, chloroplastic (360 aa).

Transmembrane regions (helical) follow at residues 29–49 (WIPL…LVIV), 96–116 (IWLF…AYLV), 128–148 (ISLG…GLLM), 166–186 (AAQA…ICLL), 204–224 (ILGW…IAAL), 255–277 (GLFY…ILYL), 297–317 (IFAA…FIFL), and 333–353 (LLDL…LLTA).

It belongs to the complex I subunit 1 family. In terms of assembly, NDH is composed of at least 16 different subunits, 5 of which are encoded in the nucleus.

The protein localises to the plastid. It localises to the chloroplast thylakoid membrane. It carries out the reaction a plastoquinone + NADH + (n+1) H(+)(in) = a plastoquinol + NAD(+) + n H(+)(out). It catalyses the reaction a plastoquinone + NADPH + (n+1) H(+)(in) = a plastoquinol + NADP(+) + n H(+)(out). In terms of biological role, NDH shuttles electrons from NAD(P)H:plastoquinone, via FMN and iron-sulfur (Fe-S) centers, to quinones in the photosynthetic chain and possibly in a chloroplast respiratory chain. The immediate electron acceptor for the enzyme in this species is believed to be plastoquinone. Couples the redox reaction to proton translocation, and thus conserves the redox energy in a proton gradient. The chain is NAD(P)H-quinone oxidoreductase subunit 1, chloroplastic from Chlorokybus atmophyticus (Soil alga).